A 305-amino-acid chain; its full sequence is UDP-3-O-acyl-N-acetylglucosamine deacetylase (305 aa).

3 residues coordinate Zn(2+): H79, H238, and D242. H265 acts as the Proton donor in catalysis.

This sequence belongs to the LpxC family. It depends on Zn(2+) as a cofactor.

It catalyses the reaction a UDP-3-O-[(3R)-3-hydroxyacyl]-N-acetyl-alpha-D-glucosamine + H2O = a UDP-3-O-[(3R)-3-hydroxyacyl]-alpha-D-glucosamine + acetate. It participates in glycolipid biosynthesis; lipid IV(A) biosynthesis; lipid IV(A) from (3R)-3-hydroxytetradecanoyl-[acyl-carrier-protein] and UDP-N-acetyl-alpha-D-glucosamine: step 2/6. Catalyzes the hydrolysis of UDP-3-O-myristoyl-N-acetylglucosamine to form UDP-3-O-myristoylglucosamine and acetate, the committed step in lipid A biosynthesis. The protein is UDP-3-O-acyl-N-acetylglucosamine deacetylase of Salmonella paratyphi A (strain ATCC 9150 / SARB42).